The following is a 307-amino-acid chain: Serine/threonine-protein phosphatase 4 catalytic subunit B (307 aa).

Mn(2+) is bound by residues D54, H56, D82, and N114. The active-site Proton donor is the H115. Positions 164 and 238 each coordinate Mn(2+). Leucine methyl ester is present on L307.

Belongs to the PPP phosphatase family. PP-4 (PP-X) subfamily. In terms of assembly, serine/threonine-protein phosphatase 4 (PP4) occurs in different assemblies of the catalytic and one or more regulatory subunits. Mn(2+) is required as a cofactor.

Its subcellular location is the cytoplasm. The protein localises to the cytoskeleton. It localises to the microtubule organizing center. It is found in the centrosome. The enzyme catalyses O-phospho-L-seryl-[protein] + H2O = L-seryl-[protein] + phosphate. It catalyses the reaction O-phospho-L-threonyl-[protein] + H2O = L-threonyl-[protein] + phosphate. Its function is as follows. Protein phosphatase that regulates many processes such as microtubule organization at centrosomes. The protein is Serine/threonine-protein phosphatase 4 catalytic subunit B (ppp4cb) of Danio rerio (Zebrafish).